An 88-amino-acid polypeptide reads, in one-letter code: Apolipoprotein C-I (88 aa).

The N-terminal stretch at 1-26 (MRLFISLPILIVVLAMALEGPAPAQA) is a signal peptide.

This sequence belongs to the apolipoprotein C1 family.

Its subcellular location is the secreted. Its function is as follows. Inhibitor of lipoprotein binding to the low density lipoprotein (LDL) receptor, LDL receptor-related protein, and very low density lipoprotein (VLDL) receptor. Associates with high density lipoproteins (HDL) and the triacylglycerol-rich lipoproteins in the plasma and makes up about 10% of the protein of the VLDL and 2% of that of HDL. Appears to interfere directly with fatty acid uptake and is also the major plasma inhibitor of cholesteryl ester transfer protein (CETP). Modulates the interaction of APOE with beta-migrating VLDL and inhibits binding of beta-VLDL to the LDL receptor-related protein. Binds free fatty acids and reduces their intracellular esterification. This is Apolipoprotein C-I (Apoc1) from Neotoma lepida (Desert woodrat).